Reading from the N-terminus, the 100-residue chain is Aspartyl/glutamyl-tRNA(Asn/Gln) amidotransferase subunit C (100 aa).

It belongs to the GatC family. In terms of assembly, heterotrimer of A, B and C subunits.

It catalyses the reaction L-glutamyl-tRNA(Gln) + L-glutamine + ATP + H2O = L-glutaminyl-tRNA(Gln) + L-glutamate + ADP + phosphate + H(+). It carries out the reaction L-aspartyl-tRNA(Asn) + L-glutamine + ATP + H2O = L-asparaginyl-tRNA(Asn) + L-glutamate + ADP + phosphate + 2 H(+). Allows the formation of correctly charged Asn-tRNA(Asn) or Gln-tRNA(Gln) through the transamidation of misacylated Asp-tRNA(Asn) or Glu-tRNA(Gln) in organisms which lack either or both of asparaginyl-tRNA or glutaminyl-tRNA synthetases. The reaction takes place in the presence of glutamine and ATP through an activated phospho-Asp-tRNA(Asn) or phospho-Glu-tRNA(Gln). The sequence is that of Aspartyl/glutamyl-tRNA(Asn/Gln) amidotransferase subunit C from Streptococcus pneumoniae (strain Taiwan19F-14).